The chain runs to 326 residues: Biotin synthase (326 aa).

Residues 47-274 (NEVQVSSLLS…ASRVRLSAGR (228 aa)) form the Radical SAM core domain. Residues Cys62, Cys66, and Cys69 each contribute to the [4Fe-4S] cluster site. Positions 106, 137, 197, and 269 each coordinate [2Fe-2S] cluster.

Belongs to the radical SAM superfamily. Biotin synthase family. Homodimer. It depends on [4Fe-4S] cluster as a cofactor. [2Fe-2S] cluster serves as cofactor.

The catalysed reaction is (4R,5S)-dethiobiotin + (sulfur carrier)-SH + 2 reduced [2Fe-2S]-[ferredoxin] + 2 S-adenosyl-L-methionine = (sulfur carrier)-H + biotin + 2 5'-deoxyadenosine + 2 L-methionine + 2 oxidized [2Fe-2S]-[ferredoxin]. It functions in the pathway cofactor biosynthesis; biotin biosynthesis; biotin from 7,8-diaminononanoate: step 2/2. Its function is as follows. Catalyzes the conversion of dethiobiotin (DTB) to biotin by the insertion of a sulfur atom into dethiobiotin via a radical-based mechanism. In Methylococcus capsulatus (strain ATCC 33009 / NCIMB 11132 / Bath), this protein is Biotin synthase.